The following is a 264-amino-acid chain: Phosphonates import ATP-binding protein PhnC (264 aa).

An ABC transporter domain is found at 7–254 (LSIRAASKTF…KLIDIYGPEF (248 aa)). 39–46 (GPSGSGKS) lines the ATP pocket.

Belongs to the ABC transporter superfamily. Phosphonates importer (TC 3.A.1.9.1) family. The complex is composed of two ATP-binding proteins (PhnC), two transmembrane proteins (PhnE) and a solute-binding protein (PhnD).

The protein localises to the cell inner membrane. It carries out the reaction phosphonate(out) + ATP + H2O = phosphonate(in) + ADP + phosphate + H(+). Its function is as follows. Part of the ABC transporter complex PhnCDE involved in phosphonates import. Responsible for energy coupling to the transport system. The chain is Phosphonates import ATP-binding protein PhnC from Caulobacter vibrioides (strain ATCC 19089 / CIP 103742 / CB 15) (Caulobacter crescentus).